Here is a 280-residue protein sequence, read N- to C-terminus: Protein IMPACT homolog (280 aa).

An RWD domain is found at 9-109 (DELLALESIY…QAAAERESKL (101 aa)).

This sequence belongs to the IMPACT family. In terms of assembly, interacts (via N-terminus) with gcn1 (via C-terminus); this interaction reduces the gcn1-gcn20 complex formation and prevents the interaction of gcn1 with gcn2 protein kinase and gcn2 activation in amino acid-starved cells. Interacts (via C-terminus) with act1; this interaction occurs in a gcn1-independent manner. Interacts with rpl39; this interaction occurs in a gcn1-independent manner. Associates (via middle region) with ribosomes; this association occurs in a gcn1-independent manner and persists under amino acid starvation conditions.

It is found in the cytoplasm. The protein resides in the nucleus. Its function is as follows. Translational regulator that ensures constant high levels of translation under amino acid starvation. Plays a role as a negative regulator of the gcn2 kinase activity; impairs gcn1-mediated gcn2 activation, and hence gcn2-mediated eIF-2-alpha phosphorylation in amino acid-starved cells and subsequent down-regulation of protein synthesis. In normal conditions, it resides in a actin complex and has no activity. This chain is Protein IMPACT homolog (yih1), found in Schizosaccharomyces pombe (strain 972 / ATCC 24843) (Fission yeast).